The following is a 67-amino-acid chain: Beta-defensin 103 (67 aa).

The N-terminal stretch at 1-22 (MRIHYLLFALLFLFLVPVPGHG) is a signal peptide. 3 disulfides stabilise this stretch: cysteine 33-cysteine 62, cysteine 40-cysteine 55, and cysteine 45-cysteine 63.

As to expression, highly expressed in skin and tonsils, and to a lesser extent in trachea, uterus, kidney, thymus, adenoid, pharynx and tongue. Low expression in salivary gland, bone marrow, colon, stomach, polyp and larynx. No expression in small intestine.

The protein resides in the secreted. Functionally, exhibits antimicrobial activity against Gram-positive bacteria S.aureus and S.pyogenes, Gram-negative bacteria P.aeruginosa and E.coli and the yeast C.albicans. Kills multiresistant S.aureus and vancomycin-resistant E.faecium. No significant hemolytic activity was observed. The polypeptide is Beta-defensin 103 (DEFB103A) (Homo sapiens (Human)).